Consider the following 519-residue polypeptide: Ent-kaurene oxidase (519 aa).

Residues 1-10 are Chloroplast intermembrane-facing; sequence MDTLLSLQAV. Residues 11 to 31 form a helical membrane-spanning segment; sequence PAAAAIGGPVVAIGGITLFFI. Over 32–519 the chain is Cytoplasmic; the sequence is REYVKDQRKK…PRLRDRVCVS (488 aa). Cys-458 serves as a coordination point for heme.

Belongs to the cytochrome P450 family. The cofactor is heme.

The protein resides in the plastid. It is found in the chloroplast outer membrane. It carries out the reaction ent-kaur-16-ene + 3 reduced [NADPH--hemoprotein reductase] + 3 O2 = ent-kaur-16-en-19-oate + 3 oxidized [NADPH--hemoprotein reductase] + 4 H2O + 4 H(+). It participates in plant hormone biosynthesis; gibberellin biosynthesis. In terms of biological role, catalyzes three successive oxidations of the 4-methyl group of ent-kaurene giving kaurenoic acid, a key step in gibberellins (GAs) biosynthesis. GAs, which are involved many processes, including stem elongation, play a central role in plant development. The protein is Ent-kaurene oxidase of Salvia miltiorrhiza (Chinese sage).